We begin with the raw amino-acid sequence, 414 residues long: Isocitrate dehydrogenase [NADP] cytoplasmic (414 aa).

Residue Ser-2 is modified to N-acetylserine. Position 42 is a phosphotyrosine (Tyr-42). An NADP(+)-binding site is contributed by 75-77; that stretch reads TIT. Position 77 (Thr-77) interacts with substrate. Residue Lys-81 is modified to N6-acetyllysine. Position 82 (Arg-82) interacts with NADP(+). Residues 94–100 and Arg-109 each bind substrate; that span reads SPNGTIR. Position 126 is an N6-succinyllysine (Lys-126). The substrate site is built by Arg-132 and Lys-212. 3 positions are modified to N6-acetyllysine: Lys-224, Lys-233, and Lys-243. Residue Asp-252 participates in Mn(2+) binding. NADP(+) is bound at residue Lys-260. Asp-275 and Asp-279 together coordinate Mn(2+). 310–315 is an NADP(+) binding site; sequence GTVTRH. Lys-321 is modified (N6-acetyllysine). Residue Asn-328 coordinates NADP(+). Ser-389 is modified (phosphoserine). Lys-400 carries the post-translational modification N6-succinyllysine.

It belongs to the isocitrate and isopropylmalate dehydrogenases family. Homodimer. Mg(2+) serves as cofactor. The cofactor is Mn(2+). In terms of processing, acetylation at Lys-374 dramatically reduces catalytic activity.

The protein localises to the cytoplasm. The protein resides in the cytosol. It carries out the reaction D-threo-isocitrate + NADP(+) = 2-oxoglutarate + CO2 + NADPH. Its function is as follows. Catalyzes the NADP(+)-dependent oxidative decarboxylation of isocitrate (D-threo-isocitrate) to 2-ketoglutarate (2-oxoglutarate), which is required by other enzymes such as the phytanoyl-CoA dioxygenase. Plays a critical role in the generation of NADPH, an important cofactor in many biosynthesis pathways. May act as a corneal epithelial crystallin and may be involved in maintaining corneal epithelial transparency. The sequence is that of Isocitrate dehydrogenase [NADP] cytoplasmic (IDH1) from Pongo abelii (Sumatran orangutan).